Reading from the N-terminus, the 160-residue chain is Sulfur-rich protein (160 aa).

2 helical membrane passes run 62-82 (ITMV…TFVL) and 91-111 (FLFL…SVFM).

Its subcellular location is the membrane. The chain is Sulfur-rich protein (srp) from Chlamydia caviae (strain ATCC VR-813 / DSM 19441 / 03DC25 / GPIC) (Chlamydophila caviae).